Reading from the N-terminus, the 338-residue chain is Taste receptor type 2 member 39 (338 aa).

The Extracellular segment spans residues 1-30 (MLGRCFPPDTKEKQQLRMTKLCDPAESELS). A helical membrane pass occupies residues 31 to 51 (PFLITLILAVLLAEYLIGIIA). The Cytoplasmic portion of the chain corresponds to 52-74 (NGFIMAIHAAEWVQNKAVSTSGR). The helical transmembrane segment at 75 to 95 (ILVFLSVSRIALQSLMMLEIT) threads the bilayer. Topologically, residues 96–116 (ISSTSLSFYSEDAVYYAFKIS) are extracellular. A helical transmembrane segment spans residues 117 to 137 (FIFLNFCSLWFAAWLSFFYFV). At 138–156 (KIANFSYPLFLKLRWRITG) the chain is on the cytoplasmic side. The helical transmembrane segment at 157 to 177 (LIPWLLWLSVFISFSHSMFCI) threads the bilayer. At 178 to 205 (NICTVYCNNSFPIHSSNSTKKTYLSEIN) the chain is on the extracellular side. Residues N185 and N194 are each glycosylated (N-linked (GlcNAc...) asparagine). The helical transmembrane segment at 206–226 (VVGLAFFFNLGIVTPLIMFIL) threads the bilayer. The Cytoplasmic portion of the chain corresponds to 227–262 (TATLLILSLKRHTLHMGSNATGSNDPSMEAHMGAIK). The helical transmembrane segment at 263–283 (AISYFLILYIFNAVALFIYLS) threads the bilayer. Residues 284 to 291 (NMFDINSL) lie on the Extracellular side of the membrane. The chain crosses the membrane as a helical span at residues 292–312 (WNNLCQIIMAAYPASHSILLI). Residues 313 to 338 (QDNPGLRRAWKRLQLRLHLYPKEWTL) lie on the Cytoplasmic side of the membrane.

It belongs to the G-protein coupled receptor T2R family. Expressed in subsets of taste receptor cells of the tongue and exclusively in gustducin-positive cells.

It is found in the membrane. Receptor that may play a role in the perception of bitterness and is gustducin-linked. May play a role in sensing the chemical composition of the gastrointestinal content. The activity of this receptor may stimulate alpha gustducin, mediate PLC-beta-2 activation and lead to the gating of TRPM5. This chain is Taste receptor type 2 member 39 (TAS2R39), found in Homo sapiens (Human).